A 396-amino-acid polypeptide reads, in one-letter code: MSRPQRISVLGATGSIGLSTLDVVQRHPDRYEAFALTGFSRLAELEALCLRHRPVYAVVPEQAAAIALQGSLAAAGIRTRVLFGEQALCEVASAPEVDMVMAAIVGAAGLPSTLAAVEAGKRVLLANKEALVMSGALFMQAVKRSGAVLLPIDSEHNAIFQSLPRNYADGLERVGVRRILLTASGGPFRETPLEQLASVTPEQACAHPNWSMGRKISVDSASMMNKGLELIEACWLFDAQPSQVEVVIHPQSVIHSMVDYVDGSVIAQLGNPDMRTPISYAMAWPERIESGVAPLDMFAVGRLDFQRPDEQRFPCLRLARQAAETGGSAPAMLNAANEVAVAAFLERHIRFSDIAVIIEDVLNREAVTAVESLDQVLAADRRARSVAGQWLTRYAG.

Residues T13, G14, S15, I16, and N127 each contribute to the NADPH site. K128 provides a ligand contact to 1-deoxy-D-xylulose 5-phosphate. E129 is a binding site for NADPH. Residue D153 participates in Mn(2+) binding. 1-deoxy-D-xylulose 5-phosphate contacts are provided by S154, E155, S184, and H207. Position 155 (E155) interacts with Mn(2+). G213 serves as a coordination point for NADPH. 1-deoxy-D-xylulose 5-phosphate contacts are provided by S220, N225, K226, and E229. A Mn(2+)-binding site is contributed by E229.

The protein belongs to the DXR family. Mg(2+) is required as a cofactor. Requires Mn(2+) as cofactor.

It catalyses the reaction 2-C-methyl-D-erythritol 4-phosphate + NADP(+) = 1-deoxy-D-xylulose 5-phosphate + NADPH + H(+). The protein operates within isoprenoid biosynthesis; isopentenyl diphosphate biosynthesis via DXP pathway; isopentenyl diphosphate from 1-deoxy-D-xylulose 5-phosphate: step 1/6. Functionally, catalyzes the NADPH-dependent rearrangement and reduction of 1-deoxy-D-xylulose-5-phosphate (DXP) to 2-C-methyl-D-erythritol 4-phosphate (MEP). In Pseudomonas paraeruginosa (strain DSM 24068 / PA7) (Pseudomonas aeruginosa (strain PA7)), this protein is 1-deoxy-D-xylulose 5-phosphate reductoisomerase.